A 446-amino-acid polypeptide reads, in one-letter code: MRYLSEIKNKQITVLGLGVTGLGIVRFLVSQGLTPTVVDSRINPPGIDWLKQNTPTLTTRFGDLDSADLCASDMIIISPGLSLTIPAIAKAINAGVEVIGDVELFARINTKPVVAVTGSNGKSTVVTLAQQVLLAAGYKAALGGNIGTAVLDLLQSDLSNNDVDVYVLELSSFQLDTTTSLQPISATVLNVSEDHLDRYASYQAYIDSKLSIYNNAALVITNADDEATHSKAKSQLSFGANQGDYSLGEYQQQTYFMQANKAFLPVTSLAVVGKHNYLNALAVMALLSPFNISKAQYSTAFSQFNGLAHRCQFVAERAGVKYFNDSKATNVGATIAAIDSLATNGQQLIVIAGGDAKGADLNALTPYLQQHVKALICFGKDAKDLMALTNKSHLTNNMSEAVTLAKQLSEPGNIVLLAPACASIDMYNNYMQRGDDFIQCVMAEQP.

118–124 (GSNGKST) is an ATP binding site.

It belongs to the MurCDEF family.

Its subcellular location is the cytoplasm. The enzyme catalyses UDP-N-acetyl-alpha-D-muramoyl-L-alanine + D-glutamate + ATP = UDP-N-acetyl-alpha-D-muramoyl-L-alanyl-D-glutamate + ADP + phosphate + H(+). Its pathway is cell wall biogenesis; peptidoglycan biosynthesis. Cell wall formation. Catalyzes the addition of glutamate to the nucleotide precursor UDP-N-acetylmuramoyl-L-alanine (UMA). In Pseudoalteromonas translucida (strain TAC 125), this protein is UDP-N-acetylmuramoylalanine--D-glutamate ligase.